The primary structure comprises 557 residues: ETHYLENE INSENSITIVE 3-like 5 protein (557 aa).

2 disordered regions span residues methionine 1 to glutamate 23 and asparagine 61 to methionine 96. Low complexity predominate over residues serine 64–serine 82. Residues glutamate 270–serine 311 are a coiled coil.

The protein belongs to the EIN3 family.

The protein localises to the nucleus. Putative transcription factor that may be involved in the ethylene response pathway. This chain is ETHYLENE INSENSITIVE 3-like 5 protein (EIL5), found in Arabidopsis thaliana (Mouse-ear cress).